Consider the following 350-residue polypeptide: Probable dual-specificity RNA methyltransferase RlmN (350 aa).

The 238-residue stretch at 105 to 342 folds into the Radical SAM core domain; it reads ANGKNSVCIS…VRQSKGANIN (238 aa). A disulfide bridge links C112 with C345. Residues C119, C123, and C126 each coordinate [4Fe-4S] cluster. S-adenosyl-L-methionine contacts are provided by residues 166-167, S198, 221-223, and N302; these read GE and SLH. Residue C345 is the S-methylcysteine intermediate of the active site.

Belongs to the radical SAM superfamily. RlmN family. The cofactor is [4Fe-4S] cluster.

The protein resides in the cytoplasm. It carries out the reaction adenosine(2503) in 23S rRNA + 2 reduced [2Fe-2S]-[ferredoxin] + 2 S-adenosyl-L-methionine = 2-methyladenosine(2503) in 23S rRNA + 5'-deoxyadenosine + L-methionine + 2 oxidized [2Fe-2S]-[ferredoxin] + S-adenosyl-L-homocysteine. It catalyses the reaction adenosine(37) in tRNA + 2 reduced [2Fe-2S]-[ferredoxin] + 2 S-adenosyl-L-methionine = 2-methyladenosine(37) in tRNA + 5'-deoxyadenosine + L-methionine + 2 oxidized [2Fe-2S]-[ferredoxin] + S-adenosyl-L-homocysteine. Functionally, specifically methylates position 2 of adenine 2503 in 23S rRNA and position 2 of adenine 37 in tRNAs. The sequence is that of Probable dual-specificity RNA methyltransferase RlmN from Endomicrobium trichonymphae.